Consider the following 344-residue polypeptide: Phenylalanine--tRNA ligase alpha subunit (344 aa).

Glu259 serves as a coordination point for Mg(2+).

Belongs to the class-II aminoacyl-tRNA synthetase family. Phe-tRNA synthetase alpha subunit type 1 subfamily. In terms of assembly, tetramer of two alpha and two beta subunits. Requires Mg(2+) as cofactor.

It localises to the cytoplasm. It carries out the reaction tRNA(Phe) + L-phenylalanine + ATP = L-phenylalanyl-tRNA(Phe) + AMP + diphosphate + H(+). In Nitrosospira multiformis (strain ATCC 25196 / NCIMB 11849 / C 71), this protein is Phenylalanine--tRNA ligase alpha subunit.